Here is a 101-residue protein sequence, read N- to C-terminus: ATP-dependent Clp protease adapter protein ClpS (101 aa).

The protein belongs to the ClpS family. As to quaternary structure, binds to the N-terminal domain of the chaperone ClpA.

In terms of biological role, involved in the modulation of the specificity of the ClpAP-mediated ATP-dependent protein degradation. The chain is ATP-dependent Clp protease adapter protein ClpS from Corynebacterium jeikeium (strain K411).